The sequence spans 666 residues: UvrABC system protein B (666 aa).

The 389-residue stretch at 26 to 414 folds into the Helicase ATP-binding domain; sequence DSFQKGEKKV…KVVEQIIRPT (389 aa). Residue 39–46 coordinates ATP; it reads GVTGSGKT. Positions 92-115 match the Beta-hairpin motif; it reads YYDYYQPEAYVPSSDTFIEKDSSI. The 163-residue stretch at 429–591 folds into the Helicase C-terminal domain; it reads QIEDLLVEIR…ITPLTIKKEV (163 aa). Residues 625–660 enclose the UVR domain; that stretch reads EVLKEKLREEMMKAAKELDFERAAILRDKMLSIQTE.

The protein belongs to the UvrB family. In terms of assembly, forms a heterotetramer with UvrA during the search for lesions. Interacts with UvrC in an incision complex.

It localises to the cytoplasm. Its function is as follows. The UvrABC repair system catalyzes the recognition and processing of DNA lesions. A damage recognition complex composed of 2 UvrA and 2 UvrB subunits scans DNA for abnormalities. Upon binding of the UvrA(2)B(2) complex to a putative damaged site, the DNA wraps around one UvrB monomer. DNA wrap is dependent on ATP binding by UvrB and probably causes local melting of the DNA helix, facilitating insertion of UvrB beta-hairpin between the DNA strands. Then UvrB probes one DNA strand for the presence of a lesion. If a lesion is found the UvrA subunits dissociate and the UvrB-DNA preincision complex is formed. This complex is subsequently bound by UvrC and the second UvrB is released. If no lesion is found, the DNA wraps around the other UvrB subunit that will check the other stand for damage. This is UvrABC system protein B from Leptospira interrogans serogroup Icterohaemorrhagiae serovar copenhageni (strain Fiocruz L1-130).